The primary structure comprises 295 residues: Pyridoxal 5'-phosphate synthase subunit PdxS (295 aa).

Residue Asp25 coordinates D-ribose 5-phosphate. The active-site Schiff-base intermediate with D-ribose 5-phosphate is Lys82. Gly154 contacts D-ribose 5-phosphate. Arg166 contacts D-glyceraldehyde 3-phosphate. Residues Gly215 and 236 to 237 contribute to the D-ribose 5-phosphate site; that span reads GS.

Belongs to the PdxS/SNZ family. In terms of assembly, in the presence of PdxT, forms a dodecamer of heterodimers.

The catalysed reaction is aldehydo-D-ribose 5-phosphate + D-glyceraldehyde 3-phosphate + L-glutamine = pyridoxal 5'-phosphate + L-glutamate + phosphate + 3 H2O + H(+). It functions in the pathway cofactor biosynthesis; pyridoxal 5'-phosphate biosynthesis. In terms of biological role, catalyzes the formation of pyridoxal 5'-phosphate from ribose 5-phosphate (RBP), glyceraldehyde 3-phosphate (G3P) and ammonia. The ammonia is provided by the PdxT subunit. Can also use ribulose 5-phosphate and dihydroxyacetone phosphate as substrates, resulting from enzyme-catalyzed isomerization of RBP and G3P, respectively. The sequence is that of Pyridoxal 5'-phosphate synthase subunit PdxS from Heliobacterium modesticaldum (strain ATCC 51547 / Ice1).